We begin with the raw amino-acid sequence, 313 residues long: Ribosomal protein L11 methyltransferase (313 aa).

Residues threonine 151, glycine 172, aspartate 194, and asparagine 245 each coordinate S-adenosyl-L-methionine.

Belongs to the methyltransferase superfamily. PrmA family.

Its subcellular location is the cytoplasm. It catalyses the reaction L-lysyl-[protein] + 3 S-adenosyl-L-methionine = N(6),N(6),N(6)-trimethyl-L-lysyl-[protein] + 3 S-adenosyl-L-homocysteine + 3 H(+). Methylates ribosomal protein L11. The polypeptide is Ribosomal protein L11 methyltransferase (Nitrosomonas europaea (strain ATCC 19718 / CIP 103999 / KCTC 2705 / NBRC 14298)).